We begin with the raw amino-acid sequence, 295 residues long: Elongation factor Ts (295 aa).

The segment at 79 to 82 (TDFV) is involved in Mg(2+) ion dislocation from EF-Tu.

Belongs to the EF-Ts family.

It is found in the cytoplasm. Its function is as follows. Associates with the EF-Tu.GDP complex and induces the exchange of GDP to GTP. It remains bound to the aminoacyl-tRNA.EF-Tu.GTP complex up to the GTP hydrolysis stage on the ribosome. The protein is Elongation factor Ts of Bacillus cytotoxicus (strain DSM 22905 / CIP 110041 / 391-98 / NVH 391-98).